Here is a 242-residue protein sequence, read N- to C-terminus: UPF0157 protein PA4798 (242 aa).

The tract at residues 215–242 is disordered; that stretch reads AGAESTPGGPADTAYFESLRSRVSKPQD.

Belongs to the UPF0157 (GrpB) family.

This chain is UPF0157 protein PA4798, found in Pseudomonas aeruginosa (strain ATCC 15692 / DSM 22644 / CIP 104116 / JCM 14847 / LMG 12228 / 1C / PRS 101 / PAO1).